Consider the following 537-residue polypeptide: Mitochondria-eating protein (537 aa).

The segment at 1–273 (MADNLRRLVS…PCSRSHSRSR (273 aa)) is interaction with YWHAG/14-3-3 protein gamma. 4 positions are modified to phosphoserine: S85, S127, S154, and S157. A coiled-coil region spans residues 115–253 (GTRDIQQLDA…SAEKSVLQGR (139 aa)). Disordered regions lie at residues 171–221 (QLKS…ANQR) and 249–293 (VLQG…AKLS). Positions 179–217 (EESRHRNSDRRRSEKRGSERRRVELRGSEQRVSDLDRRS) are enriched in basic and acidic residues. The span at 253–287 (RSARSRSPSPAPCSRSHSRSRSTSPSSAKARTPSP) shows a compositional bias: low complexity. 2 positions are modified to phosphoserine: S286 and S508.

It belongs to the MIEAP family. As to quaternary structure, interacts (via coiled-coil domains) with BNIP3L (via BH3 domain). Interacts (via coiled-coil domains) with BNIP3 (via BH3 domain). Interacts with YWHAG/14-3-3 protein gamma; a protein that also plays a role in MALM.

Its subcellular location is the cytoplasm. The protein localises to the cytosol. It localises to the mitochondrion outer membrane. The protein resides in the mitochondrion matrix. Functionally, key regulator of mitochondrial quality that mediates the repairing or degradation of unhealthy mitochondria in response to mitochondrial damage. Mediator of mitochondrial protein catabolic process (also named MALM) by mediating the degradation of damaged proteins inside mitochondria by promoting the accumulation in the mitochondrial matrix of hydrolases that are characteristic of the lysosomal lumen. Also involved in mitochondrion degradation of damaged mitochondria by promoting the formation of vacuole-like structures (named MIV), which engulf and degrade unhealthy mitochondria by accumulating lysosomes. The physical interaction of SPATA18/MIEAP, BNIP3 and BNIP3L/NIX at the mitochondrial outer membrane regulates the opening of a pore in the mitochondrial double membrane in order to mediate the translocation of lysosomal proteins from the cytoplasm to the mitochondrial matrix. Binds cardiolipin. May form molecular condensates (non-membrane-bounded organelles) within mitochondria that compartmentalize and promote cardiolipin metabolism. In Bos taurus (Bovine), this protein is Mitochondria-eating protein (SPATA18).